Reading from the N-terminus, the 194-residue chain is Holliday junction branch migration complex subunit RuvA (194 aa).

The interval 1–63 (MFEYLKGTVA…EDELSLYGFM (63 aa)) is domain I. A domain II region spans residues 64–142 (SIEELDMFQK…KTNVVYDYTL (79 aa)). A flexible linker region spans residues 143 to 151 (FNDDHKDDD). Residues 151–194 (DEAVQALMALGYSKLESEKAVEAVRDMSLGTEDVIKRALKWLMK) form a domain III region.

It belongs to the RuvA family. Homotetramer. Forms an RuvA(8)-RuvB(12)-Holliday junction (HJ) complex. HJ DNA is sandwiched between 2 RuvA tetramers; dsDNA enters through RuvA and exits via RuvB. An RuvB hexamer assembles on each DNA strand where it exits the tetramer. Each RuvB hexamer is contacted by two RuvA subunits (via domain III) on 2 adjacent RuvB subunits; this complex drives branch migration. In the full resolvosome a probable DNA-RuvA(4)-RuvB(12)-RuvC(2) complex forms which resolves the HJ.

It is found in the cytoplasm. The RuvA-RuvB-RuvC complex processes Holliday junction (HJ) DNA during genetic recombination and DNA repair, while the RuvA-RuvB complex plays an important role in the rescue of blocked DNA replication forks via replication fork reversal (RFR). RuvA specifically binds to HJ cruciform DNA, conferring on it an open structure. The RuvB hexamer acts as an ATP-dependent pump, pulling dsDNA into and through the RuvAB complex. HJ branch migration allows RuvC to scan DNA until it finds its consensus sequence, where it cleaves and resolves the cruciform DNA. The protein is Holliday junction branch migration complex subunit RuvA of Alkaliphilus oremlandii (strain OhILAs) (Clostridium oremlandii (strain OhILAs)).